Consider the following 422-residue polypeptide: Phthiocerol/phthiodiolone dimycocerosyl transferase (422 aa).

His-124 (proton acceptor) is an active-site residue.

The protein belongs to the acyltransferase PapA5 family. Monomer. Interacts directly with the acyl carrier protein (ACP) domain of the mycocerosic acid synthase (mas) protein.

It catalyses the reaction 2 a mycocerosyl-[mycocerosic acid synthase] + a phthiocerol = a dimycocerosyl phthiocerol + 2 holo-[mycocerosic acid synthase].. The catalysed reaction is 2 a mycocerosyl-[mycocerosic acid synthase] + a phthiodiolone = a dimycocerosyl phthiodiolone + 2 holo-[mycocerosic acid synthase].. It carries out the reaction 2 a mycocerosyl-[mycocerosic acid synthase] + a phenolphthiocerol = a dimycocerosyl phenolphthiocerol + 2 holo-[mycocerosic acid synthase].. Its function is as follows. Catalyzes diesterification of phthiocerol, phthiodiolone, and phenolphthiocerol with mycocerosic acids, the final step in the phthiocerol, phthiodiolone and phenolphthiocerol dimycocerosate esters (PDIM) synthesis. Can directly transfer the mycocerosate bound to the mycocerosic acid synthase (mas) onto the substrate alcohols. The sequence is that of Phthiocerol/phthiodiolone dimycocerosyl transferase (papA5) from Mycobacterium tuberculosis (strain ATCC 25177 / H37Ra).